The primary structure comprises 1434 residues: Probable deoxyribonuclease RhsA (1434 aa).

The segment at 14–42 (AMHAGNRPNPPDDRPQPCRGKPPTSPGKT) is disordered. The next 2 helical transmembrane spans lie at 48–68 (FLGA…VAAA) and 70–90 (VFLV…LAVF). YD repeat units follow at residues 486 to 521 (YDAA…CADG), 592 to 628 (DDTG…LGRE), and 847 to 876 (YDAR…LTEV).

It belongs to the RHS/WapA nuclease family.

It is found in the membrane. Toxic component of a toxin-immunity protein module, which functions as a cellular contact-dependent growth inhibition (CDI) system. This protein may be a nuclease that is specifically inhibited by its cognate immunity protein RhsAI. Upon expression of the C-terminus (residues 1284-1434) in E.coli growth is inhibited, cells elongate, nucleoids condense and plasmid DNA is degraded; these effects are blocked specifically by cognate immunity protein RshIA. Cell contact is necessary for growth inhibition. This Dickeya dadantii (strain 3937) (Erwinia chrysanthemi (strain 3937)) protein is Probable deoxyribonuclease RhsA (rhsA).